A 451-amino-acid polypeptide reads, in one-letter code: MSAFDKHQISTFRFVRCALDAQTGVATLVYAFDQGPELVETVAVPGAPFALGGANATAVQQALQLLHLIAGVSYFKAAVPPNIAIDSYSIDAETAALVQSVYLHGLGEFAYRNGLQLHGKIRFPVAAQAAAAAPALGLRVHALVAIGGGKDSLVSIEALRHAGVDQTVSWIGGSQLIRACAERTGLPVLNIGRVLAPELFELNRQGAWNGHIPVTAVNSAILVLAALLNGVDQVVFSNERSASYGSQIPGTGEVNHQWSKGWAFEQAFGDYVQRHVAADLRYYSLLRPLSELAVARQFAKTDRYDAHFSSCNRNFHIMGERPVHRWCGVCPKCHFVFLALAPFMPKTRLVNIFGRNLLDDATQAGGYDALLEFQDHKPFECVGEGRESRTAMAVLASRAEWKEDAVVKRFIRDIQPQLDPNDLQVEPLMAIEGEHRIPPALWERVRANFAV.

Belongs to the MurL family.

The catalysed reaction is UDP-N-acetyl-alpha-D-muramoyl-L-alanyl-L-glutamate + ATP + H2O = UDP-N-acetyl-alpha-D-muramoyl-L-alanyl-D-glutamate + AMP + diphosphate + H(+). It participates in cell wall biogenesis; peptidoglycan biosynthesis. Functionally, cell wall formation. Catalyzes epimerization of the terminal L-glutamate in UDP-N-acetyl-alpha-D-muramoyl-L-alanyl-L-glutamate. The polypeptide is UDP-N-acetyl-alpha-D-muramoyl-L-alanyl-L-glutamate epimerase (Xanthomonas oryzae pv. oryzae (strain MAFF 311018)).